The primary structure comprises 489 residues: MGAVAINRKRSDESFNFINQQSTNPLRNSPYFQASKKRRFSFAMSEDSGKPASSNPTISRISRYPDAKAPLRREIHAPSRGILRYGKAKSNDYCEKDANFFVRKYDDAKRSALEALRFVNKGKDFVDLGDEVEKEEVVSDDSSVQAIEVIDCDDDEEKKNLQPSFSSGVTDVKKGENFRVEDTSMMLDSLSLDRDVDNDASSLEAYRKLMQSAEKRNSKLEALGFEIVLNEKKLSLLRQSRPKTVEKRVEVPREPFIPLTEDEEAEVYRAFSGRNRRKVLATHENSNIDITGEVLQCLTPSAWLNDEVINVYLELLKERETREPKKYLKCHYFNTFFYKKLVSDSGYNFKAVRRWTTQRKLGYALIDCDMIFVPIHRGVHWTLAVINNRESKLLYLDSLNGVDPMILNALAKYMGDEANEKSGKKIDANSWDMEFVEDLPQQKNGYDCGMFMLKYIDFFSRGLGLCFSQEHMPYFRLRTAKEILRLRAD.

The tract at residues 43 to 66 (AMSEDSGKPASSNPTISRISRYPD) is disordered. The span at 51 to 60 (PASSNPTISR) shows a compositional bias: polar residues. A coiled-coil region spans residues 200-223 (ASSLEAYRKLMQSAEKRNSKLEAL). Catalysis depends on residues H380, D397, and C448.

The protein belongs to the peptidase C48 family. In terms of assembly, interacts with NUA (via N-terminus). Interacts with KIN10. As to expression, expressed in seedlings, leaves, shoots, flowers and roots.

The protein resides in the nucleus membrane. It carries out the reaction Hydrolysis of the alpha-linked peptide bond in the sequence Gly-Gly-|-Ala-Thr-Tyr at the C-terminal end of the small ubiquitin-like modifier (SUMO) propeptide, Smt3, leading to the mature form of the protein. A second reaction involves the cleavage of an epsilon-linked peptide bond between the C-terminal glycine of the mature SUMO and the lysine epsilon-amino group of the target protein.. Inhibited by thiol reagent and N-ethylmaleimide, but not by ubiquitin aldehyde, pepstatin A or benzamidine HCl. Its function is as follows. Protease that catalyzes two essential functions in the SUMO pathway: processing of full-length SUMOs to their mature forms and deconjugation of SUMO from targeted proteins. Cleaves precursors of SUM1 and SUM2, but not of SUM3 or SUM5. Able to release SUM1 and SUM2 from conjugates, but unable to cleave SUM3. Acts predominantly as an isopeptidase, cleaving SUMO-conjugated proteins better than SUMO peptides. Plays an important role in the control of flowering time. This chain is Ubiquitin-like-specific protease ESD4 (ESD4), found in Arabidopsis thaliana (Mouse-ear cress).